We begin with the raw amino-acid sequence, 356 residues long: UDP-N-acetylglucosamine--N-acetylmuramyl-(pentapeptide) pyrophosphoryl-undecaprenol N-acetylglucosamine transferase (356 aa).

UDP-N-acetyl-alpha-D-glucosamine is bound by residues 14 to 16 (TGG), Asn-126, Arg-162, Ser-190, Ile-244, and Gln-289.

It belongs to the glycosyltransferase 28 family. MurG subfamily.

It localises to the cell inner membrane. It catalyses the reaction di-trans,octa-cis-undecaprenyl diphospho-N-acetyl-alpha-D-muramoyl-L-alanyl-D-glutamyl-meso-2,6-diaminopimeloyl-D-alanyl-D-alanine + UDP-N-acetyl-alpha-D-glucosamine = di-trans,octa-cis-undecaprenyl diphospho-[N-acetyl-alpha-D-glucosaminyl-(1-&gt;4)]-N-acetyl-alpha-D-muramoyl-L-alanyl-D-glutamyl-meso-2,6-diaminopimeloyl-D-alanyl-D-alanine + UDP + H(+). The protein operates within cell wall biogenesis; peptidoglycan biosynthesis. Functionally, cell wall formation. Catalyzes the transfer of a GlcNAc subunit on undecaprenyl-pyrophosphoryl-MurNAc-pentapeptide (lipid intermediate I) to form undecaprenyl-pyrophosphoryl-MurNAc-(pentapeptide)GlcNAc (lipid intermediate II). The polypeptide is UDP-N-acetylglucosamine--N-acetylmuramyl-(pentapeptide) pyrophosphoryl-undecaprenol N-acetylglucosamine transferase (Cupriavidus pinatubonensis (strain JMP 134 / LMG 1197) (Cupriavidus necator (strain JMP 134))).